The chain runs to 377 residues: Palmitoyltransferase ZDHHC16 (377 aa).

The Cytoplasmic segment spans residues 1–77 (MRGQRSLLLG…VYWLVDNVIR (77 aa)). Residues 78–98 (WFGVVFVVLVIVLTGSIVAIA) traverse the membrane as a helical segment. Residues 99 to 116 (YLCVLPLILRTYSVPRLC) lie on the Lumenal side of the membrane. A helical membrane pass occupies residues 117-137 (WHFFYSHWNLILIVFHYYQAI). The Cytoplasmic portion of the chain corresponds to 138-198 (TTPPGYPPQG…NNCVGHYNHR (61 aa)). Residues 155 to 205 (SICKKCIYPKPARTHHCSICNRCVLKMDHHCPWLNNCVGHYNHRYFFSFCF) enclose the DHHC domain. Cysteine 185 (S-palmitoyl cysteine intermediate) is an active-site residue. The helical transmembrane segment at 199 to 219 (YFFSFCFFMTLGCVYCSYGSW) threads the bilayer. Topologically, residues 220–266 (DLFREAYAAIEKMKQLDKNKLQAVANQTYHQTPPPTFSFRERMTHKS) are lumenal. Residues 267–287 (LVYLWFLCSSVALALGALTVW) form a helical membrane-spanning segment. Residues 288–377 (HAVLISRGET…TAHSASVMAV (90 aa)) lie on the Cytoplasmic side of the membrane.

Belongs to the DHHC palmitoyltransferase family. Interacts with ABL1. Interacts with COPS5/JAB1. As to expression, widely expressed.

It is found in the endoplasmic reticulum membrane. It catalyses the reaction L-cysteinyl-[protein] + hexadecanoyl-CoA = S-hexadecanoyl-L-cysteinyl-[protein] + CoA. Palmitoyl acyltransferase that mediates palmitoylation of proteins such as PLN and ZDHHC6. Required during embryonic heart development and cardiac function, possibly by mediating palmitoylation of PLN, thereby affecting PLN phosphorylation and homooligomerization. Also required for eye development. Palmitoylates ZDHHC6, affecting the quaternary assembly of ZDHHC6, its localization, stability and function. May play a role in DNA damage response. May be involved in apoptosis regulation. Involved in the proliferation of neural stem cells by regulating the FGF/ERK pathway. In Homo sapiens (Human), this protein is Palmitoyltransferase ZDHHC16.